We begin with the raw amino-acid sequence, 197 residues long: Nucleoid occlusion factor SlmA (197 aa).

An HTH tetR-type domain is found at 7–67 (INRREHILQC…GLIEFIEESL (61 aa)). The segment at residues 30–49 (TTAKLAAEVGVSEAALYRHF) is a DNA-binding region (H-T-H motif). Residues 109–136 (DALLGENERLRSRISQLFSKIETHLKQI) are a coiled coil.

Belongs to the nucleoid occlusion factor SlmA family. Homodimer. Interacts with FtsZ.

It is found in the cytoplasm. The protein localises to the nucleoid. Functionally, required for nucleoid occlusion (NO) phenomenon, which prevents Z-ring formation and cell division over the nucleoid. Acts as a DNA-associated cell division inhibitor that binds simultaneously chromosomal DNA and FtsZ, and disrupts the assembly of FtsZ polymers. SlmA-DNA-binding sequences (SBS) are dispersed on non-Ter regions of the chromosome, preventing FtsZ polymerization at these regions. The chain is Nucleoid occlusion factor SlmA from Shewanella pealeana (strain ATCC 700345 / ANG-SQ1).